The primary structure comprises 547 residues: MAPSVGILGERDQGQDVRTNNVTAVMAIANIVKSSLGPQGLDKMLVDDVGDVTITNDGATILRQLEVQHPAAKVIVELSQLQDKEVGDGTTSVVILAAELLKRANELIKNKVHPTSIITGFKIAAKEACTYIKEHLAISVEELGREALINAAKTSMSSKLIGPESNLFSQIVVDAVESVKMTNLMGDTKYPIKNVKIIKSHGQSTLQSQLIRGYVLQTQRCDQQMKTRIEKAKIALLDFNLNKFRLQMGIQILVNDPKNLEKIRFKECEILKERCKKIIEAGANVIITSAGMDDVATKYLVEAGVMGLRRVDKHDLRRLAKATGGTIVTTLATPEGDEVFEASYLGECAEVYEEAVGDNDCIFFKGTKRANCASIIIRGANEFMVDEVDRSLHDSLCVVKRTLESGYVVPGGGAVEIALSIKLEDFARTLGTKEQTAVAEFCEALNIIPKVLAANAAQDATELVSKLRALHAASQSSDDPAKKELKNCGLDLSLGKVRNNVKAGVLEPMVSKIKSLRFATEAAITILRIDDMIKLNPQNEELPQGRH.

This sequence belongs to the TCP-1 chaperonin family. Heterooligomeric complex of about 850 to 900 kDa that forms two stacked rings, 12 to 16 nm in diameter.

Its subcellular location is the cytoplasm. Its function is as follows. Molecular chaperone; assists the folding of proteins upon ATP hydrolysis. Known to play a role, in vitro, in the folding of actin and tubulin. The polypeptide is T-complex protein 1 subunit alpha (Tetrahymena pyriformis).